Consider the following 339-residue polypeptide: S-adenosylmethionine:tRNA ribosyltransferase-isomerase (339 aa).

This sequence belongs to the QueA family. Monomer.

Its subcellular location is the cytoplasm. It catalyses the reaction 7-aminomethyl-7-carbaguanosine(34) in tRNA + S-adenosyl-L-methionine = epoxyqueuosine(34) in tRNA + adenine + L-methionine + 2 H(+). It functions in the pathway tRNA modification; tRNA-queuosine biosynthesis. In terms of biological role, transfers and isomerizes the ribose moiety from AdoMet to the 7-aminomethyl group of 7-deazaguanine (preQ1-tRNA) to give epoxyqueuosine (oQ-tRNA). The polypeptide is S-adenosylmethionine:tRNA ribosyltransferase-isomerase (Campylobacter fetus subsp. fetus (strain 82-40)).